An 88-amino-acid chain; its full sequence is CRISPR-associated endoribonuclease Cas2 3 (88 aa).

Aspartate 9 provides a ligand contact to Mg(2+).

This sequence belongs to the CRISPR-associated endoribonuclease Cas2 protein family. Homodimer, forms a heterotetramer with a Cas1 homodimer. Requires Mg(2+) as cofactor.

Functionally, CRISPR (clustered regularly interspaced short palindromic repeat), is an adaptive immune system that provides protection against mobile genetic elements (viruses, transposable elements and conjugative plasmids). CRISPR clusters contain sequences complementary to antecedent mobile elements and target invading nucleic acids. CRISPR clusters are transcribed and processed into CRISPR RNA (crRNA). Functions as a ssRNA-specific endoribonuclease. Involved in the integration of spacer DNA into the CRISPR cassette. This is CRISPR-associated endoribonuclease Cas2 3 from Thermodesulfovibrio yellowstonii (strain ATCC 51303 / DSM 11347 / YP87).